We begin with the raw amino-acid sequence, 23 residues long: Basic phospholipase A2 Smb-N6 (23 aa).

This sequence belongs to the phospholipase A2 family. Group II subfamily. It depends on Ca(2+) as a cofactor. In terms of processing, contains 7 disulfide bonds. Expressed by the venom gland.

Its subcellular location is the secreted. It carries out the reaction a 1,2-diacyl-sn-glycero-3-phosphocholine + H2O = a 1-acyl-sn-glycero-3-phosphocholine + a fatty acid + H(+). Functionally, snake venom phospholipase A2 (PLA2) that shows myotoxic activities. PLA2 catalyzes the calcium-dependent hydrolysis of the 2-acyl groups in 3-sn-phosphoglycerides. This is Basic phospholipase A2 Smb-N6 from Sistrurus miliarius barbouri (Dusky pigmy rattlesnake).